We begin with the raw amino-acid sequence, 122 residues long: Histone H2B subacrosomal variant (122 aa).

Residues 1 to 25 (MARNVTKRNKRCRGHQKAIYKKKSH) show a composition bias toward basic residues. The disordered stretch occupies residues 1 to 30 (MARNVTKRNKRCRGHQKAIYKKKSHSSSES).

Belongs to the histone H2B family. In terms of tissue distribution, testis-specific. Restricted to the spermatid population of seminiferous epithelium. Not present in Sertoli cells, spermatogonia, spermatocytes or cells of the interstitial tissue (at protein level).

It localises to the cytoplasm. May act as an acrosome-nuclear docking protein in sperm. The protein is Histone H2B subacrosomal variant (SUBH2BV) of Bos taurus (Bovine).